A 2737-amino-acid chain; its full sequence is Non-reducing polyketide synthase ATEG_07661 (2737 aa).

The tract at residues serine 75–valine 245 is N-terminal acylcarrier protein transacylase domain (SAT). Residue cysteine 154 is the Nucleophile; for transacylase activity of the active site. The active-site Proton donor/acceptor; for transacylase activity is histidine 276. The Ketosynthase family 3 (KS3) domain maps to asparagine 427–glutamate 854. Active-site for beta-ketoacyl synthase activity residues include cysteine 603, histidine 738, and histidine 777. The tract at residues phenylalanine 969–serine 1260 is malonyl-CoA:ACP transacylase (MAT). Residues leucine 1368–aspartate 1503 form an N-terminal hotdog fold region. A PKS/mFAS DH domain is found at leucine 1368–serine 1683. A product template (PT) domain region spans residues phenylalanine 1399 to serine 1681. The Proton acceptor; for dehydratase activity role is filled by histidine 1403. Residues valine 1535–serine 1683 are C-terminal hotdog fold. The active-site Proton donor; for dehydratase activity is aspartate 1592. A disordered region spans residues serine 1724 to serine 1747. Basic residues predominate over residues arginine 1725 to serine 1739. Positions arginine 1750–leucine 1824 constitute a Carrier domain. Serine 1784 is subject to O-(pantetheine 4'-phosphoryl)serine. The segment at proline 1827–aspartate 1876 is disordered. Over residues isoleucine 1834–serine 1848 the composition is skewed to acidic residues. Over residues asparagine 1849–serine 1866 the composition is skewed to low complexity. Residues alanine 2094 to glycine 2270 are methyltransferase domain. The segment at valine 2362 to valine 2665 is NADPH-binding domain.

Its pathway is secondary metabolite biosynthesis. Non-reducing polyketide synthase; part of the cluster B that mediates the biosynthesis of azasperpyranones, members of the azaphilone family that exhibit anti-cancer activities. Azasperpyranones are synthesized by 2 clusters, A and B. Cluster A is responsible for the production of the polyhydric phenol moiety while the azaphilonoid scaffold is produced by the cluster B. The non-reducing polyketide synthase ATEG_03629 produces 5-methyl orsellinic acid, which is then reduced to 5-methyl orsellinic aldehyde by the NRPS-like protein ATEG_03630. 5-methyl orsellinic aldehyde is then first hydroxylated by the FAD-dependent monooxygenase ATEG_03635 and subsequently hydroxylated by the cytochrome P450 monooxygenase ATEG_03631 to produce the unstable polyhydric phenol precursor of azasperpyranones. On the other hand, the polyketide synthase ATEG_07659 is responsible for producing the 3,5-dimethyloctadienone moiety from acetyl-CoA, three malonyl-CoA, and two S-adenosyl methionines (SAM). The 3,5-dimethyloctadienone moiety is then loaded onto the SAT domain of ATEG_07661 and extended with four malonyl-CoA and one SAM, which leads to the formation of 2,4-dihydroxy-6-(5,7-dimethyl-2-oxo-trans-3-trans-5-nonadienyl)-3-methylbenzaldehyde (compound 8) after reductive release and aldol condensation. The FAD-dependent monooxygenase ATEG_07662 is the next enzyme in the biosynthesis sequence and hydroxylates the side chain at the benzylic position of compound 8. In Aspergillus nidulans, afoF, the ortholog of the FAD-dependent oxygenase ATEG_07660, is the key enzyme for the biosynthesis of asperfuranone by catalyzing the hydroxylation at C-8 of to prevent the formation of a six-membered ring hemiacetal intermediate and thus facilitating the formation of a five-membered ring to produce asperfuranone. In Aspergillus terreus, ATEG_07660 is probably not functional, which leads to the formation of the six-membered ring hemiacetal intermediate presperpyranone instead of asperfuranone. Finally, ATEG_03636 is involved in the condensation of the polyhydric phenol moiety produced by cluster A and the perasperpyranone precursor produced by cluster B, to yield azasperpyranone A. Further modifications of azasperpyranone A result in the production of derivatives, including azasperpyranone B to F. This Aspergillus terreus (strain NIH 2624 / FGSC A1156) protein is Non-reducing polyketide synthase ATEG_07661.